The sequence spans 274 residues: tRNA-cytidine(32) 2-sulfurtransferase (274 aa).

A PP-loop motif motif is present at residues 40-45 (SGGKDS). [4Fe-4S] cluster contacts are provided by C115, C118, and C206.

It belongs to the TtcA family. As to quaternary structure, homodimer. The cofactor is Mg(2+). It depends on [4Fe-4S] cluster as a cofactor.

It localises to the cytoplasm. The catalysed reaction is cytidine(32) in tRNA + S-sulfanyl-L-cysteinyl-[cysteine desulfurase] + AH2 + ATP = 2-thiocytidine(32) in tRNA + L-cysteinyl-[cysteine desulfurase] + A + AMP + diphosphate + H(+). Its pathway is tRNA modification. In terms of biological role, catalyzes the ATP-dependent 2-thiolation of cytidine in position 32 of tRNA, to form 2-thiocytidine (s(2)C32). The sulfur atoms are provided by the cysteine/cysteine desulfurase (IscS) system. This Azotobacter vinelandii (strain DJ / ATCC BAA-1303) protein is tRNA-cytidine(32) 2-sulfurtransferase.